Here is a 92-residue protein sequence, read N- to C-terminus: Small ribosomal subunit protein bS18B (92 aa).

Belongs to the bacterial ribosomal protein bS18 family. In terms of assembly, part of the 30S ribosomal subunit. Forms a tight heterodimer with protein bS6.

Binds as a heterodimer with protein bS6 to the central domain of the 16S rRNA, where it helps stabilize the platform of the 30S subunit. The sequence is that of Small ribosomal subunit protein bS18B from Cupriavidus pinatubonensis (strain JMP 134 / LMG 1197) (Cupriavidus necator (strain JMP 134)).